Consider the following 182-residue polypeptide: Neuropeptide CCHamide-1 (182 aa).

The first 22 residues, 1-22 (MWYSKCSWTLVVLVALFALVTG), serve as a signal peptide directing secretion. The cysteines at positions 24 and 31 are disulfide-linked. A Histidine amide modification is found at H35. Residues 39–182 (SGGKAVIDAK…ENYSGYELTK (144 aa)) constitute a propeptide that is removed on maturation. 2 disordered regions span residues 67–103 (NNNN…AAPA) and 133–154 (QLQD…DAAA). Residues 87–103 (RNTNANSANNIPLAAPA) are compositionally biased toward low complexity. Residue N174 is glycosylated (N-linked (GlcNAc...) asparagine).

In terms of tissue distribution, expressed in endocrine cells of the larval midgut (at protein level). In the brain, expressed in the optic lobes, lateral protocerebrum, subesophageal ganglion, and intermediate and superior medial protocerebrum (at protein level). Expressed in DN1a neurons but not in other clock neurons and expression follows a rhythmic pattern controlled by the circadian clock (at protein level). In the posterior midgut, expressed in enteroendocrine cells (at protein level). Low levels in larval brain with higher levels in larval and adult gut and adult brain.

Its subcellular location is the secreted. In terms of biological role, neuropeptide ligand for the CCHamide-1 receptor CCHa1-R. Neuromessenger mediating signaling between neuronal cells of the circadian clock network involved in regulation of sleep latency (the time required to fall asleep), amount of sleep and depth of sleep (arousability). Together with PDF, involved in regulating intensity and periodicity of daytime activity. In subsets of clock neurons modulates the rhythmic expression of PDP1 and PDF, and together with PDF modulates the rhythmic expression of circadian protein PER/period, but not TIM/timeless. Mediates signaling from DN1a (anterior dorsal neurons 1) clock neurons to s-LNv (small ventral lateral neurons) clock neurons through CCHa1-R, contributing to regulation of activity rhythms by the circadian clock, particularly in the morning. May be involved in signaling between clock neurons and non-clock neurons, such as the fan-shaped body, involved in sleep homeostasis. In response to a high protein diet mediates hormonal signaling between the gut and a CCHa1-R expressing subset of dopaminergic cells in the protocerebral anterior medial (PAM) cluster of the brain. This suppresses arousability by mechano-sensory stimulation (but not thermal stimulation) but is not involved in regulation of sleep patterns. This Drosophila melanogaster (Fruit fly) protein is Neuropeptide CCHamide-1.